The sequence spans 211 residues: MYQPDFPTVPFRLGLYPVVDSVAWIERLLEAGVRTIQLRIKDKRDEEVESDVIAAIALGRRYDARLFINDYWRLAIKHRAYGVHLGQEDLETTDLKAIQAAGLRLGVSTHDDMEIDIALAAKPSYIALGHVFPTQTKQMPSAPQGLAQLASHIERLADYPTVAIGGISLERAPAVLATGVGSVAVVSAITQAADWREATAQLLAIAGVGDE.

4-amino-2-methyl-5-(diphosphooxymethyl)pyrimidine is bound by residues 37-41 (QLRIK) and Asn69. Residues Asp70 and Asp89 each contribute to the Mg(2+) site. Ser108 provides a ligand contact to 4-amino-2-methyl-5-(diphosphooxymethyl)pyrimidine. A 2-[(2R,5Z)-2-carboxy-4-methylthiazol-5(2H)-ylidene]ethyl phosphate-binding site is contributed by 134 to 136 (TQT). Position 137 (Lys137) interacts with 4-amino-2-methyl-5-(diphosphooxymethyl)pyrimidine. 2-[(2R,5Z)-2-carboxy-4-methylthiazol-5(2H)-ylidene]ethyl phosphate is bound by residues Gly166 and 186-187 (VS).

This sequence belongs to the thiamine-phosphate synthase family. Mg(2+) is required as a cofactor.

It carries out the reaction 2-[(2R,5Z)-2-carboxy-4-methylthiazol-5(2H)-ylidene]ethyl phosphate + 4-amino-2-methyl-5-(diphosphooxymethyl)pyrimidine + 2 H(+) = thiamine phosphate + CO2 + diphosphate. The enzyme catalyses 2-(2-carboxy-4-methylthiazol-5-yl)ethyl phosphate + 4-amino-2-methyl-5-(diphosphooxymethyl)pyrimidine + 2 H(+) = thiamine phosphate + CO2 + diphosphate. It catalyses the reaction 4-methyl-5-(2-phosphooxyethyl)-thiazole + 4-amino-2-methyl-5-(diphosphooxymethyl)pyrimidine + H(+) = thiamine phosphate + diphosphate. Its pathway is cofactor biosynthesis; thiamine diphosphate biosynthesis; thiamine phosphate from 4-amino-2-methyl-5-diphosphomethylpyrimidine and 4-methyl-5-(2-phosphoethyl)-thiazole: step 1/1. Functionally, condenses 4-methyl-5-(beta-hydroxyethyl)thiazole monophosphate (THZ-P) and 2-methyl-4-amino-5-hydroxymethyl pyrimidine pyrophosphate (HMP-PP) to form thiamine monophosphate (TMP). The chain is Thiamine-phosphate synthase from Salmonella agona (strain SL483).